The following is a 473-amino-acid chain: GTPase Der (473 aa).

EngA-type G domains are found at residues 5 to 170 and 178 to 351; these read PVVA…PEDV and LKLA…ASSM. Residues 11 to 18, 58 to 62, 123 to 126, 184 to 191, 231 to 235, and 296 to 299 each bind GTP; these read GRPNVGKS, DTGGI, NKID, DTAGV, and NKWD. One can recognise a KH-like domain in the interval 352–436; that stretch reads FKVSTNRLTQ…PLKVEFKLNT (85 aa). The disordered stretch occupies residues 438–473; it reads PYAGKKTTSSKKLRPGVSEARQKRRNMKYKKGSHKK. The segment covering 459–473 has biased composition (basic residues); that stretch reads QKRRNMKYKKGSHKK.

It belongs to the TRAFAC class TrmE-Era-EngA-EngB-Septin-like GTPase superfamily. EngA (Der) GTPase family. In terms of assembly, associates with the 50S ribosomal subunit.

Functionally, GTPase that plays an essential role in the late steps of ribosome biogenesis. This is GTPase Der from Psychrobacter sp. (strain PRwf-1).